Consider the following 34-residue polypeptide: Photosystem II reaction center protein M (34 aa).

A helical transmembrane segment spans residues 5-25 (ILAFIATALFILVPTAFLLII).

Belongs to the PsbM family. PSII is composed of 1 copy each of membrane proteins PsbA, PsbB, PsbC, PsbD, PsbE, PsbF, PsbH, PsbI, PsbJ, PsbK, PsbL, PsbM, PsbT, PsbX, PsbY, PsbZ, Psb30/Ycf12, at least 3 peripheral proteins of the oxygen-evolving complex and a large number of cofactors. It forms dimeric complexes.

It is found in the plastid. It localises to the chloroplast thylakoid membrane. Its function is as follows. One of the components of the core complex of photosystem II (PSII). PSII is a light-driven water:plastoquinone oxidoreductase that uses light energy to abstract electrons from H(2)O, generating O(2) and a proton gradient subsequently used for ATP formation. It consists of a core antenna complex that captures photons, and an electron transfer chain that converts photonic excitation into a charge separation. This subunit is found at the monomer-monomer interface. The protein is Photosystem II reaction center protein M of Calycanthus floridus var. glaucus (Eastern sweetshrub).